A 920-amino-acid chain; its full sequence is Plasma membrane ATPase (920 aa).

Residues 1-11 are compositionally biased toward basic and acidic residues; that stretch reads MSDERITEKPP. The tract at residues 1–71 is disordered; the sequence is MSDERITEKP…AEEDDGPAAA (71 aa). Residues 1–117 are Cytoplasmic-facing; sequence MSDERITEKP…REESENLLVK (117 aa). A compositionally biased stretch (acidic residues) spans 17–50; that stretch reads SEGEPVPEEEVEEETEEEVPDEQSSEDDDIDGLI. The chain crosses the membrane as a helical span at residues 118-138; that stretch reads FLMFFIGPIQFVMEAAAVLAA. Topologically, residues 139–142 are extracellular; that stretch reads GLED. Residues 143-162 traverse the membrane as a helical segment; the sequence is WVDFGVICGLLFLNAGVGFI. At 163 to 293 the chain is on the cytoplasmic side; the sequence is QEFQAGSIVE…GQGHFTEVLN (131 aa). Residues 294 to 315 form a helical membrane-spanning segment; it reads GIGVILLVLVVITLLLIWTACF. The Extracellular segment spans residues 316-326; that stretch reads YRTVRIVPILR. A helical membrane pass occupies residues 327 to 349; sequence YTLGITIVGVPVGLPAVVTTTMA. Over 350–721 the chain is Cytoplasmic; it reads GGAAYLAKKQ…IAILNHSLDI (372 aa). Residue D380 is the 4-aspartylphosphate intermediate of the active site. 2 residues coordinate Mg(2+): D636 and D640. A helical transmembrane segment spans residues 722–740; that stretch reads DLIVFIAIFADVATLAIAY. Residues 741-756 lie on the Extracellular side of the membrane; sequence DNAPFSPSPVKWNLPR. Residues 757 to 776 traverse the membrane as a helical segment; the sequence is LWGMSIMMGIILAAGTWITL. The Cytoplasmic portion of the chain corresponds to 777 to 826; the sequence is TTMFLPKGGIIQNFGSIDGILFLEISLTENWLIFITRAVGPFWSSIPSWQ. A helical transmembrane segment spans residues 827–847; sequence LAGAVFVVDVVATMFTLFGWW. Topologically, residues 848–859 are extracellular; sequence SQNWTDIVTVVR. The helical transmembrane segment at 860-876 threads the bilayer; the sequence is IYIWSIGIFCCLGGAYY. The Cytoplasmic portion of the chain corresponds to 877-920; sequence LMSESETFDRLMNGKPLKENKSTRSVEDFLASMRRVSTQHEKGN.

Belongs to the cation transport ATPase (P-type) (TC 3.A.3) family. Type IIIA subfamily.

It localises to the cell membrane. It carries out the reaction ATP + H2O + H(+)(in) = ADP + phosphate + 2 H(+)(out). The plasma membrane ATPase of plants and fungi is a hydrogen ion pump. The proton gradient it generates drives the active transport of nutrients by H(+)-symport. The resulting external acidification and/or internal alkinization may mediate growth responses. The sequence is that of Plasma membrane ATPase from Zygosaccharomyces rouxii.